The sequence spans 177 residues: SAYSvFN domain-containing protein 1 (177 aa).

The Cytoplasmic portion of the chain corresponds to 1–100; that stretch reads MADFQEQLRQ…CLKYTLWTVY (100 aa). Residues 57–70 show a composition bias toward polar residues; it reads SENSQDEAVTSSES. Residues 57–85 are disordered; that stretch reads SENSQDEAVTSSESELVPEEQPTRSTDHH. An intramembrane region (helical) is located at residues 101-121; that stretch reads LLFWITLYVIAIKLSFGLVFL. At 122 to 177 the chain is on the cytoplasmic side; it reads MFSALFGIYFNTRTEPKKRNEMSAYSVFNKNCESIDGTLKAEQFEREIRYGSGSVR.

This sequence belongs to the SAYSD1 family.

The protein localises to the endoplasmic reticulum membrane. Functionally, ufmylation 'reader' component of a translocation-associated quality control pathway, a mechanism that takes place when a ribosome has stalled during translation, and which is required to degrade clogged substrates. Specifically recognizes and binds ufmylated ribosomes when a ribosome has stalled, promoting the transport of stalled nascent chain to lysosomes for degradation. In Drosophila melanogaster (Fruit fly), this protein is SAYSvFN domain-containing protein 1.